The sequence spans 677 residues: Secretogranin-1 (677 aa).

A signal peptide spans 1–20; sequence MQPAMLLGLLGAAALAAVSS. Cys-36 and Cys-57 are disulfide-bonded. Disordered regions lie at residues 63–505 and 531–558; these read KSGK…RQYE and NSDFEKRGNPDDSFLEDEGEDRNGVTLT. Basic and acidic residues predominate over residues 64-90; sequence SGKEVKGEEKGENQNSKFEVRLLRDPA. Ser-93, Ser-99, and Ser-100 each carry phosphoserine. O-linked (Xyl...) (chondroitin sulfate) serine glycosylation is present at Ser-93. Thr-115 carries O-linked (GalNAc...) threonine glycosylation. Positions 118-133 are enriched in basic and acidic residues; the sequence is GNEKWTEGGGHSREGV. Residues Ser-129, Ser-147, Ser-190, and Ser-220 each carry the phosphoserine modification. Composition is skewed to basic and acidic residues over residues 148-192 and 200-249; these read KEAK…DSGE and KRSE…KPQE. O-linked (Xyl...) (chondroitin sulfate) serine glycosylation is present at Ser-237. The segment covering 251–280 has biased composition (acidic residues); it reads TDQDQSQEESQEGEEGEEGEEGEEGEEDSA. Phosphoserine is present on residues Ser-256, Ser-260, Ser-300, Ser-301, Ser-318, and Ser-342. A compositionally biased stretch (basic and acidic residues) spans 306–322; sequence PLSEERRPSPKESKEAD. Tyr-348 is subject to Sulfotyrosine. 2 stretches are compositionally biased toward basic and acidic residues: residues 363–409 and 421–455; these read RGSE…ERSY and GREPGAHSALDTREEKRLLDEGHYPVRESPIDTAK. Ser-365, Ser-375, and Ser-378 each carry phosphoserine. Tyr-472 carries the post-translational modification Sulfotyrosine. Positions 491–504 are enriched in basic and acidic residues; it reads EESREEVRFPDRQY. Residues Ser-493, Ser-532, and Ser-543 each carry the phosphoserine modification. Sulfotyrosine is present on residues Tyr-566 and Tyr-624. The tract at residues 622-646 is disordered; it reads DFYDSEEQMGPHQEANDEKARADQR. Residue Ser-626 is modified to Phosphoserine. Residues 635–646 show a composition bias toward basic and acidic residues; that stretch reads EANDEKARADQR.

It belongs to the chromogranin/secretogranin protein family. In terms of assembly, interacts with ITPR1 in the secretory granules.

It is found in the secreted. Functionally, secretogranin-1 is a neuroendocrine secretory granule protein, which may be the precursor for other biologically active peptides. In Mus musculus (Mouse), this protein is Secretogranin-1 (Chgb).